We begin with the raw amino-acid sequence, 456 residues long: Trigger factor (456 aa).

The 86-residue stretch at 192 to 277 (GDTVVIDFVG…IHEVKTKEVP (86 aa)) folds into the PPIase FKBP-type domain.

It belongs to the FKBP-type PPIase family. Tig subfamily.

Its subcellular location is the cytoplasm. The catalysed reaction is [protein]-peptidylproline (omega=180) = [protein]-peptidylproline (omega=0). Involved in protein export. Acts as a chaperone by maintaining the newly synthesized protein in an open conformation. Functions as a peptidyl-prolyl cis-trans isomerase. This Streptococcus pyogenes serotype M4 (strain MGAS10750) protein is Trigger factor.